The primary structure comprises 541 residues: Chaperonin GroEL 1 (541 aa).

ATP-binding positions include 29 to 32 (TLGP), 86 to 90 (DGTTT), glycine 413, 477 to 479 (NAA), and aspartate 493.

This sequence belongs to the chaperonin (HSP60) family. Forms a cylinder of 14 subunits composed of two heptameric rings stacked back-to-back. Interacts with the co-chaperonin GroES.

Its subcellular location is the cytoplasm. The enzyme catalyses ATP + H2O + a folded polypeptide = ADP + phosphate + an unfolded polypeptide.. In terms of biological role, together with its co-chaperonin GroES, plays an essential role in assisting protein folding. The GroEL-GroES system forms a nano-cage that allows encapsulation of the non-native substrate proteins and provides a physical environment optimized to promote and accelerate protein folding. The polypeptide is Chaperonin GroEL 1 (Paenarthrobacter aurescens (strain TC1)).